Here is a 921-residue protein sequence, read N- to C-terminus: Isoleucine--tRNA ligase (921 aa).

The short motif at 57–67 (PYANGDIHMGH) is the 'HIGH' region element. An L-isoleucyl-5'-AMP-binding site is contributed by E552. The 'KMSKS' region signature appears at 593–597 (KMSKS). Position 596 (K596) interacts with ATP. The Zn(2+) site is built by C888, C891, C908, and C911.

The protein belongs to the class-I aminoacyl-tRNA synthetase family. IleS type 1 subfamily. As to quaternary structure, monomer. The cofactor is Zn(2+).

The protein localises to the cytoplasm. It catalyses the reaction tRNA(Ile) + L-isoleucine + ATP = L-isoleucyl-tRNA(Ile) + AMP + diphosphate. Catalyzes the attachment of isoleucine to tRNA(Ile). As IleRS can inadvertently accommodate and process structurally similar amino acids such as valine, to avoid such errors it has two additional distinct tRNA(Ile)-dependent editing activities. One activity is designated as 'pretransfer' editing and involves the hydrolysis of activated Val-AMP. The other activity is designated 'posttransfer' editing and involves deacylation of mischarged Val-tRNA(Ile). The protein is Isoleucine--tRNA ligase of Bacillus anthracis (strain A0248).